Consider the following 236-residue polypeptide: Uridylate kinase (236 aa).

An ATP-binding site is contributed by K10 to G13. UMP is bound at residue G52. Positions 53 and 57 each coordinate ATP. UMP-binding positions include D72 and T133 to T140. Residues T160, Y166, and D169 each contribute to the ATP site.

Belongs to the UMP kinase family. As to quaternary structure, homohexamer.

The protein resides in the cytoplasm. The enzyme catalyses UMP + ATP = UDP + ADP. It functions in the pathway pyrimidine metabolism; CTP biosynthesis via de novo pathway; UDP from UMP (UMPK route): step 1/1. With respect to regulation, inhibited by UTP. Functionally, catalyzes the reversible phosphorylation of UMP to UDP. The protein is Uridylate kinase of Cupriavidus necator (strain ATCC 17699 / DSM 428 / KCTC 22496 / NCIMB 10442 / H16 / Stanier 337) (Ralstonia eutropha).